The following is a 177-amino-acid chain: ATP synthase subunit delta (177 aa).

Belongs to the ATPase delta chain family. In terms of assembly, F-type ATPases have 2 components, F(1) - the catalytic core - and F(0) - the membrane proton channel. F(1) has five subunits: alpha(3), beta(3), gamma(1), delta(1), epsilon(1). F(0) has three main subunits: a(1), b(2) and c(10-14). The alpha and beta chains form an alternating ring which encloses part of the gamma chain. F(1) is attached to F(0) by a central stalk formed by the gamma and epsilon chains, while a peripheral stalk is formed by the delta and b chains.

It is found in the cell inner membrane. F(1)F(0) ATP synthase produces ATP from ADP in the presence of a proton or sodium gradient. F-type ATPases consist of two structural domains, F(1) containing the extramembraneous catalytic core and F(0) containing the membrane proton channel, linked together by a central stalk and a peripheral stalk. During catalysis, ATP synthesis in the catalytic domain of F(1) is coupled via a rotary mechanism of the central stalk subunits to proton translocation. In terms of biological role, this protein is part of the stalk that links CF(0) to CF(1). It either transmits conformational changes from CF(0) to CF(1) or is implicated in proton conduction. The chain is ATP synthase subunit delta from Citrobacter koseri (strain ATCC BAA-895 / CDC 4225-83 / SGSC4696).